The primary structure comprises 240 residues: Tumor protein p53-inducible nuclear protein 1 (240 aa).

The LIR signature appears at 25–37 (EKEDDEWILVDFI).

As to quaternary structure, interacts with p53/TP53 and HIPK2. Interacts with PRKCG, GABARAP, GABARAPL1, GABARAPL2, MAP1LC3A, MAP1LC3B and MAP1LC3C. Ubiquitously expressed.

It is found in the cytoplasm. Its subcellular location is the cytosol. It localises to the nucleus. The protein localises to the PML body. The protein resides in the cytoplasmic vesicle. It is found in the autophagosome. In terms of biological role, antiproliferative and proapoptotic protein involved in cell stress response which acts as a dual regulator of transcription and autophagy. Acts as a positive regulator of autophagy. In response to cellular stress or activation of autophagy, relocates to autophagosomes where it interacts with autophagosome-associated proteins GABARAP, GABARAPL1/L2, MAP1LC3A/B/C and regulates autophagy. Acts as an antioxidant and plays a major role in p53/TP53-driven oxidative stress response. Possesses both a p53/TP53-independent intracellular reactive oxygen species (ROS) regulatory function and a p53/TP53-dependent transcription regulatory function. Positively regulates p53/TP53 and p73/TP73 and stimulates their capacity to induce apoptosis and regulate cell cycle. In response to double-strand DNA breaks, promotes p53/TP53 phosphorylation on 'Ser-46' and subsequent apoptosis. Acts as a tumor suppressor by inducing cell death by an autophagy and caspase-dependent mechanism. Can reduce cell migration by regulating the expression of SPARC. This is Tumor protein p53-inducible nuclear protein 1 (TP53INP1) from Homo sapiens (Human).